The chain runs to 101 residues: MIPGELITDDGELELNAGRATVTVTVSNTGDRPVQVGSHYHFYEVNAALSFDREAARGFRLNIAAGTAVRFEPGQERTVELVALAGDRVVYGFNGKVMGKL.

This sequence belongs to the urease beta subunit family. As to quaternary structure, heterotrimer of UreA (gamma), UreB (beta) and UreC (alpha) subunits. Three heterotrimers associate to form the active enzyme.

It localises to the cytoplasm. The enzyme catalyses urea + 2 H2O + H(+) = hydrogencarbonate + 2 NH4(+). The protein operates within nitrogen metabolism; urea degradation; CO(2) and NH(3) from urea (urease route): step 1/1. In Paraburkholderia phymatum (strain DSM 17167 / CIP 108236 / LMG 21445 / STM815) (Burkholderia phymatum), this protein is Urease subunit beta.